A 176-amino-acid chain; its full sequence is R-phycoerythrin beta chain (176 aa).

C50 and C61 together coordinate phycourobilin. N4-methylasparagine is present on N72. C82 and C158 together coordinate (2R,3E)-phycoerythrobilin.

The protein belongs to the phycobiliprotein family. As to quaternary structure, heterodimer of an alpha and a beta chain. Contains two covalently linked phycoerythrobilin chromophores and one covalently linked phycourobilin chromophore.

Its subcellular location is the plastid. The protein localises to the chloroplast thylakoid membrane. In terms of biological role, light-harvesting photosynthetic bile pigment-protein from the phycobiliprotein complex. The polypeptide is R-phycoerythrin beta chain (cpeB) (Aglaothamnion neglectum (Red alga)).